Consider the following 491-residue polypeptide: Glutamate--tRNA ligase (491 aa).

Residues 9–19 carry the 'HIGH' region motif; the sequence is PSPTGTPHVGM. The 'KMSKS' region motif lies at 253–257; it reads KLSKR. K256 serves as a coordination point for ATP.

This sequence belongs to the class-I aminoacyl-tRNA synthetase family. Glutamate--tRNA ligase type 1 subfamily. In terms of assembly, monomer.

It localises to the cytoplasm. It carries out the reaction tRNA(Glu) + L-glutamate + ATP = L-glutamyl-tRNA(Glu) + AMP + diphosphate. Its function is as follows. Catalyzes the attachment of glutamate to tRNA(Glu) in a two-step reaction: glutamate is first activated by ATP to form Glu-AMP and then transferred to the acceptor end of tRNA(Glu). The chain is Glutamate--tRNA ligase from Leifsonia xyli subsp. xyli (strain CTCB07).